We begin with the raw amino-acid sequence, 631 residues long: tRNA uridine 5-carboxymethylaminomethyl modification enzyme MnmG (631 aa).

13–18 (GGGHAG) contributes to the FAD binding site. 273 to 287 (GPRYCPSIEDKVNRF) serves as a coordination point for NAD(+).

This sequence belongs to the MnmG family. Homodimer. Heterotetramer of two MnmE and two MnmG subunits. It depends on FAD as a cofactor.

It is found in the cytoplasm. Its function is as follows. NAD-binding protein involved in the addition of a carboxymethylaminomethyl (cmnm) group at the wobble position (U34) of certain tRNAs, forming tRNA-cmnm(5)s(2)U34. The sequence is that of tRNA uridine 5-carboxymethylaminomethyl modification enzyme MnmG from Chromohalobacter salexigens (strain ATCC BAA-138 / DSM 3043 / CIP 106854 / NCIMB 13768 / 1H11).